The primary structure comprises 677 residues: Multicopper oxidase GIP1 (677 aa).

An N-terminal signal peptide occupies residues 1–23 (MLTSPRLILLLLAWVFSALVASA). 2 Plastocyanin-like domains span residues 31–150 (ITWE…IRRK) and 179–379 (LVMV…RYKG). N-linked (GlcNAc...) asparagine glycosylation is present at Asn-76. The Cu cation site is built by His-80, His-82, His-130, and His-132. N-linked (GlcNAc...) asparagine glycans are attached at residues Asn-228, Asn-283, Asn-396, and Asn-478. The 120-residue stretch at 469-588 (DEGLVIRTKN…AGGMAIAILD (120 aa)) folds into the Plastocyanin-like 3 domain. His-503 contacts Cu cation. Asn-520 carries N-linked (GlcNAc...) asparagine glycosylation. The tract at residues 629–651 (PLLAVSPSGGPKKDSGETSASDS) is disordered.

The protein belongs to the multicopper oxidase family. In terms of assembly, might be part of an extracellular enzyme complex composed of GIP1, aurF, aurO and aurS.

The protein localises to the secreted. The protein resides in the extracellular space. The protein operates within pigment biosynthesis. Functionally, multicopper oxidase; part of the gene cluster that mediates the biosynthesis of aurofusarin, a red mycelium pigment which is acting as a mycotoxin. The first step is performed by the polyketide synthase which condenses one acetyl-CoA and 6 malonyl-CoA units to form the first intermediate, the cyclic heptaketide and yellow pigment YWA1. The C2 hydroxyl group in the pyrone ring of YWA1 is probably formed during ring closure by an aldol-type cyclization reaction. The dehydratase aurZ then acts as the first tailoring enzyme in the aurofusarin biosynthetic pathway by converting YWA1 to nor-rubrofusarin. Nor-rubrofusarin is then methylated to rubrofusarin by the O-methyltransferase aurJ. Rubrofusarin is then transported across the plasma membrane by the rubrofusarin-specific pump aurT for further enzymatic processing by the extracellular complex composed of GIP1, aurF, aurO and aurS to yield aurofusarin. The chain is Multicopper oxidase GIP1 from Gibberella zeae (strain ATCC MYA-4620 / CBS 123657 / FGSC 9075 / NRRL 31084 / PH-1) (Wheat head blight fungus).